A 364-amino-acid chain; its full sequence is tRNA 2-selenouridine synthase (364 aa).

The region spanning 14 to 137 (LLADTPLIDV…LRQTAIQATW (124 aa)) is the Rhodanese domain. Catalysis depends on Cys97, which acts as the S-selanylcysteine intermediate.

It belongs to the SelU family. As to quaternary structure, monomer.

It carries out the reaction 5-methylaminomethyl-2-thiouridine(34) in tRNA + selenophosphate + (2E)-geranyl diphosphate + H2O + H(+) = 5-methylaminomethyl-2-selenouridine(34) in tRNA + (2E)-thiogeraniol + phosphate + diphosphate. It catalyses the reaction 5-methylaminomethyl-2-thiouridine(34) in tRNA + (2E)-geranyl diphosphate = 5-methylaminomethyl-S-(2E)-geranyl-thiouridine(34) in tRNA + diphosphate. The catalysed reaction is 5-methylaminomethyl-S-(2E)-geranyl-thiouridine(34) in tRNA + selenophosphate + H(+) = 5-methylaminomethyl-2-(Se-phospho)selenouridine(34) in tRNA + (2E)-thiogeraniol. The enzyme catalyses 5-methylaminomethyl-2-(Se-phospho)selenouridine(34) in tRNA + H2O = 5-methylaminomethyl-2-selenouridine(34) in tRNA + phosphate. Involved in the post-transcriptional modification of the uridine at the wobble position (U34) of tRNA(Lys), tRNA(Glu) and tRNA(Gln). Catalyzes the conversion of 2-thiouridine (S2U-RNA) to 2-selenouridine (Se2U-RNA). Acts in a two-step process involving geranylation of 2-thiouridine (S2U) to S-geranyl-2-thiouridine (geS2U) and subsequent selenation of the latter derivative to 2-selenouridine (Se2U) in the tRNA chain. The chain is tRNA 2-selenouridine synthase from Salmonella enteritidis.